Here is a 264-residue protein sequence, read N- to C-terminus: Neurexophilin-2 (264 aa).

A signal peptide spans 1–22; the sequence is MRLRPLPLVVVPGLLQLLFCDS. Residues 23-90 are II; it reads KEVVHATEGL…WDWLANITEI (68 aa). 4 N-linked (GlcNAc...) asparagine glycosylation sites follow: asparagine 86, asparagine 139, asparagine 149, and asparagine 155. The III stretch occupies residues 91 to 169; it reads QEPLARTKRR…LVPPSKVVEF (79 aa). The interval 170 to 178 is IV (linker domain); that stretch reads EVSPQSTLE. The segment at 179-264 is v (Cys-rich); it reads TKESKSFNCR…HSETPYLSSG (86 aa).

It belongs to the neurexophilin family. May be proteolytically processed at the boundary between the N-terminal non-conserved and the central conserved domain in neuron-like cells. As to expression, expressed in brain and kidney.

It localises to the secreted. May be signaling molecules that resemble neuropeptides and that act by binding to alpha-neurexins and possibly other receptors. The chain is Neurexophilin-2 (NXPH2) from Homo sapiens (Human).